A 793-amino-acid polypeptide reads, in one-letter code: Potassium transporter 18 (793 aa).

The Cytoplasmic segment spans residues 1–53 (METRTNEYSRKGAMWELERNLDQPMDAEAGRLRNMYREKTYPTILLLRLAFQS). Residues 54–74 (LGVVFGDLGTSPLYVFYNIFP) traverse the membrane as a helical segment. Over 75–86 (HGIEDTEQVIGA) the chain is Extracellular. Residues 87–107 (LSLIIYSLTLIPLVKYVFIVL) traverse the membrane as a helical segment. Over 108–172 (RANDNGQGGT…WLEGHQFRKN (65 aa)) the chain is Cytoplasmic. A helical transmembrane segment spans residues 173 to 193 (LILILVLFGTCMAVGDGILTP). The Extracellular portion of the chain corresponds to 194–214 (AISVLSATGGIQVEEGRMRND). Residues 215-235 (VVVIISVLILIGLFSMQHYGT) form a helical membrane-spanning segment. The Cytoplasmic segment spans residues 236–237 (DK). The helical transmembrane segment at 238 to 258 (VSWLFAPIVFVWFILIGILGA) threads the bilayer. Over 259–287 (VNICKYDHSVLKAFNPVYVYRYFKRGKTS) the chain is Extracellular. The chain crosses the membrane as a helical span at residues 288 to 308 (WTSLGGIMLSITGTEALFADL). Residue S309 is a topological domain, cytoplasmic. Residues 310–330 (YFPVQAIQIAFTVVVFPCLLL) form a helical membrane-spanning segment. The Extracellular portion of the chain corresponds to 331–351 (QYTGQAAFIAANTNQVSHAFY). Residues 352-372 (ISLPAPILWPAFAVATAAAIV) traverse the membrane as a helical segment. The Cytoplasmic segment spans residues 373 to 409 (ASQATISATYSIIKQALALGCFPRVKIIHTSKKYLGQ). The helical transmembrane segment at 410–430 (IYSPDINWILMVFCIAVTAGF) threads the bilayer. Over 431–442 (KNQSQIANAYGT) the chain is Extracellular. N432 carries an N-linked (GlcNAc...) asparagine glycan. The helical transmembrane segment at 443–463 (AVIMVMLVTTFLMIPIMLLVW) threads the bilayer. At 464-468 (RSHWT) the chain is on the cytoplasmic side. A helical membrane pass occupies residues 469 to 489 (LVVAFTVLSLLVEIPYFSAVV). The Extracellular segment spans residues 490–494 (RKIDQ). A helical membrane pass occupies residues 495–515 (GGWVPLVFAAGFMIIMYVWHY). Topologically, residues 516–793 (GTLKRYEFEM…MLNVGQVFYV (278 aa)) are cytoplasmic.

The protein belongs to the HAK/KUP transporter (TC 2.A.72.3) family.

Its subcellular location is the membrane. High-affinity potassium transporter. The polypeptide is Potassium transporter 18 (HAK18) (Oryza sativa subsp. japonica (Rice)).